A 591-amino-acid polypeptide reads, in one-letter code: V-type ATP synthase alpha chain (591 aa).

242–249 (GPFGAGKT) serves as a coordination point for ATP.

The protein belongs to the ATPase alpha/beta chains family.

The catalysed reaction is ATP + H2O + 4 H(+)(in) = ADP + phosphate + 5 H(+)(out). Produces ATP from ADP in the presence of a proton gradient across the membrane. The V-type alpha chain is a catalytic subunit. The polypeptide is V-type ATP synthase alpha chain (Chlamydia caviae (strain ATCC VR-813 / DSM 19441 / 03DC25 / GPIC) (Chlamydophila caviae)).